The primary structure comprises 122 residues: MIQSFTRLNVADNTGAKEIMCIKVLGGSKRRYATVGDVIVASVKKALPTGKIKKGQVVKAVVVRTHKEVQRENGSLIRFDDNAAVILDAKREPVGTRIFGPVAREVRYSGFMKIVSLAPEVL.

It belongs to the universal ribosomal protein uL14 family. As to quaternary structure, part of the 50S ribosomal subunit. Forms a cluster with proteins L3 and L19. In the 70S ribosome, L14 and L19 interact and together make contacts with the 16S rRNA in bridges B5 and B8.

Its function is as follows. Binds to 23S rRNA. Forms part of two intersubunit bridges in the 70S ribosome. The chain is Large ribosomal subunit protein uL14 from Aliarcobacter butzleri (strain RM4018) (Arcobacter butzleri).